The chain runs to 889 residues: Cytoplasmic aconitate hydratase (889 aa).

Residues Q86 and 205–207 (DSH) each bind substrate. [4Fe-4S] cluster-binding residues include C437, C503, and C506. Residues R536, R541, R699, and 779 to 780 (SR) each bind substrate.

The protein belongs to the aconitase/IPM isomerase family. Requires [4Fe-4S] cluster as cofactor.

It is found in the cytoplasm. The protein localises to the cytosol. It catalyses the reaction citrate = D-threo-isocitrate. Functionally, bifunctional iron sensor that switches between 2 activities depending on iron availability. Iron deprivation, promotes its mRNA binding activity through which it regulates the expression of genes involved in iron uptake, sequestration and utilization. Binds to iron-responsive elements (IRES) in the untranslated region of target mRNAs preventing for instance the translation of ferritin and aminolevulinic acid synthase and stabilizing the transferrin receptor mRNA. Conversely, when cellular iron levels are high, binds a 4Fe-4S cluster which precludes RNA binding activity and promotes the aconitase activity, the isomerization of citrate to isocitrate via cis-aconitate. This is Cytoplasmic aconitate hydratase (ACO1) from Gallus gallus (Chicken).